Reading from the N-terminus, the 707-residue chain is MGERRFSNQQIDRLLRPKSVAVIGASDRKGALGATLLNNLVQYEFSGDIYPVNPKRDELLGLKVYHEVAELPEGIDCAVLAIPRPFVIDTVRQLAQRGCGAVVIYSAGFSEAGEEGMKDQLELAAIAAEYGMVIEGPNCLGCTNYVERVPLTFVETNMQTPPKGTRAVGIASQSGALAAVLATALHPRGLYVSSSVSTGNEAASGVEDYVEWLVDDEDTHVIAMYVESLRRPKAFIAAARRAHAAGKPIVMLHPGKSNKAQESAATHTGAMAGDYALMKTKLAREGVIFADTLEELADITEIALRCRALPGANMAVLGESGALRGLAFDIAEDIGLDLIHLDDDNSPALRAILPDFVPVSNPTDITALGLSEPEIYTKVLTALLEDERIGSVVASIIQSDPITSGIKFPHIIKVLDGGTFAKPLVFAGVDEGATVPKEYIDGLRKVGIPWFPSTERAYRAIARLADLSKRDLADNSGDPIVVPGLDAVSGVVPEYKAKELLRPLGIAFPPSQFAANAEAAAAAARAIGYPVVMKAQAAALGHKSDAGGVILNLKTDDEVRDAFARIYGNVEAYDRSIALDGVLIEKMGKMGTEMIVGAKNDPQWGPVVLAGFGGVTAEILKDVKLFTPEMDAAAVQRGLLELKQAPILKGYRGAPALDVAALAELIVQIGRVMAGNPSIREIDLNPVIIHPAGEGVAALDALMLVER.

ATP contacts are provided by residues His267 and 524–535 (ARAIGYPVVMKA). The region spanning 498–549 (KELLRPLGIAFPPSQFAANAEAAAAAARAIGYPVVMKAQAAALGHKSDAGGV) is the ATP-grasp domain.

It in the N-terminal section; belongs to the acetate CoA ligase alpha subunit family. The protein in the C-terminal section; belongs to the acetate CoA ligase beta subunit family. Homodimer.

The catalysed reaction is (E)-ferulate + ATP + CoA = (E)-feruloyl-CoA + ADP + phosphate. In terms of biological role, catalyzes the formation of feruloyl-CoA, ADP and phosphate from ferulate, CoA and ATP. This chain is Trans-feruloyl-CoA synthase FCS1, found in Unknown prokaryotic organism.